Consider the following 437-residue polypeptide: ATP-dependent protease ATPase subunit HslU (437 aa).

ATP-binding positions include valine 18, 60-65 (GCGKTE), aspartate 250, glutamate 315, and arginine 387.

It belongs to the ClpX chaperone family. HslU subfamily. In terms of assembly, a double ring-shaped homohexamer of HslV is capped on each side by a ring-shaped HslU homohexamer. The assembly of the HslU/HslV complex is dependent on binding of ATP.

Its subcellular location is the cytoplasm. Functionally, ATPase subunit of a proteasome-like degradation complex; this subunit has chaperone activity. The binding of ATP and its subsequent hydrolysis by HslU are essential for unfolding of protein substrates subsequently hydrolyzed by HslV. HslU recognizes the N-terminal part of its protein substrates and unfolds these before they are guided to HslV for hydrolysis. The protein is ATP-dependent protease ATPase subunit HslU of Methylobacterium radiotolerans (strain ATCC 27329 / DSM 1819 / JCM 2831 / NBRC 15690 / NCIMB 10815 / 0-1).